A 361-amino-acid polypeptide reads, in one-letter code: Phospho-N-acetylmuramoyl-pentapeptide-transferase (361 aa).

10 helical membrane passes run 26-46 (SILA…VLIQ), 73-93 (TMGG…WGDL), 98-118 (VWLV…DDWI), 139-159 (IFGL…AAVT), 168-188 (IALP…IVGF), 200-220 (GLAI…AYAS), 237-257 (AGDL…FLWF), 264-284 (VFMG…IAVI), 289-309 (LVLV…IIQV), and 339-359 (VIVR…ATLK).

Belongs to the glycosyltransferase 4 family. MraY subfamily. Requires Mg(2+) as cofactor.

It localises to the cell inner membrane. The enzyme catalyses UDP-N-acetyl-alpha-D-muramoyl-L-alanyl-gamma-D-glutamyl-meso-2,6-diaminopimeloyl-D-alanyl-D-alanine + di-trans,octa-cis-undecaprenyl phosphate = di-trans,octa-cis-undecaprenyl diphospho-N-acetyl-alpha-D-muramoyl-L-alanyl-D-glutamyl-meso-2,6-diaminopimeloyl-D-alanyl-D-alanine + UMP. The protein operates within cell wall biogenesis; peptidoglycan biosynthesis. Its function is as follows. Catalyzes the initial step of the lipid cycle reactions in the biosynthesis of the cell wall peptidoglycan: transfers peptidoglycan precursor phospho-MurNAc-pentapeptide from UDP-MurNAc-pentapeptide onto the lipid carrier undecaprenyl phosphate, yielding undecaprenyl-pyrophosphoryl-MurNAc-pentapeptide, known as lipid I. The sequence is that of Phospho-N-acetylmuramoyl-pentapeptide-transferase from Xylella fastidiosa (strain M12).